The sequence spans 689 residues: Quinidine resistance protein 3 (689 aa).

The segment covering 1–24 (MQAQGSQSNVGSLRSNCSDNSLPN) has biased composition (polar residues). The tract at residues 1-73 (MQAQGSQSNV…DNQLSRLKSE (73 aa)) is disordered. Topologically, residues 1–108 (MQAQGSQSNV…RDYPPMMKKM (108 aa)) are extracellular. Basic and acidic residues-rich tracts occupy residues 29–51 (MHCD…EKTN) and 59–73 (SREH…LKSE). A helical transmembrane segment spans residues 109–131 (IVFLIAFSSMMGPMGTSIIFPAI). Residues 132 to 139 (NSITTEFK) lie on the Cytoplasmic side of the membrane. A helical transmembrane segment spans residues 140 to 163 (TSVIMVNVSIGVYLLSLGVFPLWW). Residues 164 to 175 (SSLSELEGRRTT) lie on the Extracellular side of the membrane. The chain crosses the membrane as a helical span at residues 176–193 (YITSFALLFAFNIGSALA). Topologically, residues 194-235 (PDINSFIALRMLCGAASASVQSVGAGTVADLYISEDRGKNLS) are cytoplasmic. Residues 236 to 256 (YYYLGPLLAPLLSPIFGSLLV) form a helical membrane-spanning segment. Topologically, residues 257–265 (NRWPWRSTQ) are extracellular. The chain crosses the membrane as a helical span at residues 266-283 (WFMVILSGCNVILLTVLL). Topologically, residues 284 to 475 (PETLRKQDSK…KSLHFLEYPP (192 aa)) are cytoplasmic. Residue S436 is modified to Phosphoserine. A helical transmembrane segment spans residues 476–493 (VALAITFSAISFSTVYFV). Over 494–510 (NMTVEYKYSRPPYNFKP) the chain is Extracellular. The chain crosses the membrane as a helical span at residues 511–532 (LYIGLLYIPNSVTYFFASIYGG). The Cytoplasmic segment spans residues 533–558 (RWVDMLLKRYKEKYGILAPEARISWN). A helical membrane pass occupies residues 559-577 (VVTSVISFPIALLIFGWCL). Residues 578 to 586 (DKKCHWVTP) are Extracellular-facing. The helical transmembrane segment at 587–609 (LIGTALFGYAAMMTIGATLSYLV) threads the bilayer. Residues 610–624 (DSLPGKGATGVALNN) are Cytoplasmic-facing. A helical membrane pass occupies residues 625–642 (LIRQILAATAVFVTTPML). Topologically, residues 643–648 (NGMGTG) are extracellular. Residues 649–668 (WAFTMLAFIVLGASSVLIIL) form a helical membrane-spanning segment. The Cytoplasmic portion of the chain corresponds to 669–689 (KKHGDYWRENYDLQKLYDKID).

It belongs to the major facilitator superfamily. CAR1 family.

Its subcellular location is the cell membrane. Its function is as follows. Multidrug resistance transporter involved in resistance and adaptation to quinidine and to the herbicide barban (4-chloro-2-butynyl [3-chlorophenyl] carbamate). This is Quinidine resistance protein 3 (QDR3) from Saccharomyces cerevisiae (strain ATCC 204508 / S288c) (Baker's yeast).